The sequence spans 341 residues: Probable dual-specificity RNA methyltransferase RlmN (341 aa).

Glu88 serves as the catalytic Proton acceptor. One can recognise a Radical SAM core domain in the interval 94 to 314; it reads EGDRATLCIS…ESHGFTCTIR (221 aa). The cysteines at positions 101 and 325 are disulfide-linked. [4Fe-4S] cluster contacts are provided by Cys108, Cys112, and Cys115. Residues 153–154, Ser185, 206–208, and His282 contribute to the S-adenosyl-L-methionine site; these read GE and SLH. The active-site S-methylcysteine intermediate is Cys325.

The protein belongs to the radical SAM superfamily. RlmN family. [4Fe-4S] cluster is required as a cofactor.

It is found in the cytoplasm. The catalysed reaction is adenosine(2503) in 23S rRNA + 2 reduced [2Fe-2S]-[ferredoxin] + 2 S-adenosyl-L-methionine = 2-methyladenosine(2503) in 23S rRNA + 5'-deoxyadenosine + L-methionine + 2 oxidized [2Fe-2S]-[ferredoxin] + S-adenosyl-L-homocysteine. It carries out the reaction adenosine(37) in tRNA + 2 reduced [2Fe-2S]-[ferredoxin] + 2 S-adenosyl-L-methionine = 2-methyladenosine(37) in tRNA + 5'-deoxyadenosine + L-methionine + 2 oxidized [2Fe-2S]-[ferredoxin] + S-adenosyl-L-homocysteine. In terms of biological role, specifically methylates position 2 of adenine 2503 in 23S rRNA and position 2 of adenine 37 in tRNAs. The polypeptide is Probable dual-specificity RNA methyltransferase RlmN (Porphyromonas gingivalis (strain ATCC BAA-308 / W83)).